Consider the following 304-residue polypeptide: Oxygen-dependent coproporphyrinogen-III oxidase (304 aa).

Serine 93 serves as a coordination point for substrate. Positions 97 and 107 each coordinate a divalent metal cation. Histidine 107 (proton donor) is an active-site residue. 109–111 (NVR) contacts substrate. A divalent metal cation contacts are provided by histidine 146 and histidine 176. The segment at 241–276 (YVEFNLVYDRGTLFGLQSGGRTESILMSLPPQVRWG) is important for dimerization. 259–261 (GGR) serves as a coordination point for substrate.

The protein belongs to the aerobic coproporphyrinogen-III oxidase family. Homodimer. Requires a divalent metal cation as cofactor.

The protein resides in the cytoplasm. It carries out the reaction coproporphyrinogen III + O2 + 2 H(+) = protoporphyrinogen IX + 2 CO2 + 2 H2O. The protein operates within porphyrin-containing compound metabolism; protoporphyrin-IX biosynthesis; protoporphyrinogen-IX from coproporphyrinogen-III (O2 route): step 1/1. Its function is as follows. Involved in the heme biosynthesis. Catalyzes the aerobic oxidative decarboxylation of propionate groups of rings A and B of coproporphyrinogen-III to yield the vinyl groups in protoporphyrinogen-IX. This chain is Oxygen-dependent coproporphyrinogen-III oxidase, found in Pseudomonas syringae pv. syringae (strain B728a).